The following is a 281-amino-acid chain: Pantothenate synthetase (281 aa).

An ATP-binding site is contributed by 30–37 (MGNLHQGH). The active-site Proton donor is H37. A (R)-pantoate-binding site is contributed by Q61. Residue Q61 participates in beta-alanine binding. 149–152 (GNKD) contacts ATP. Q155 lines the (R)-pantoate pocket. ATP is bound by residues I178 and 186 to 189 (MSSR).

The protein belongs to the pantothenate synthetase family. Homodimer.

It is found in the cytoplasm. It carries out the reaction (R)-pantoate + beta-alanine + ATP = (R)-pantothenate + AMP + diphosphate + H(+). It functions in the pathway cofactor biosynthesis; (R)-pantothenate biosynthesis; (R)-pantothenate from (R)-pantoate and beta-alanine: step 1/1. In terms of biological role, catalyzes the condensation of pantoate with beta-alanine in an ATP-dependent reaction via a pantoyl-adenylate intermediate. This Shewanella oneidensis (strain ATCC 700550 / JCM 31522 / CIP 106686 / LMG 19005 / NCIMB 14063 / MR-1) protein is Pantothenate synthetase.